Reading from the N-terminus, the 285-residue chain is Bifunctional protein FolD (285 aa).

Residues 166–168 (GAS) and I232 each bind NADP(+).

The protein belongs to the tetrahydrofolate dehydrogenase/cyclohydrolase family. Homodimer.

It catalyses the reaction (6R)-5,10-methylene-5,6,7,8-tetrahydrofolate + NADP(+) = (6R)-5,10-methenyltetrahydrofolate + NADPH. The enzyme catalyses (6R)-5,10-methenyltetrahydrofolate + H2O = (6R)-10-formyltetrahydrofolate + H(+). The protein operates within one-carbon metabolism; tetrahydrofolate interconversion. Catalyzes the oxidation of 5,10-methylenetetrahydrofolate to 5,10-methenyltetrahydrofolate and then the hydrolysis of 5,10-methenyltetrahydrofolate to 10-formyltetrahydrofolate. The sequence is that of Bifunctional protein FolD from Psychromonas ingrahamii (strain DSM 17664 / CCUG 51855 / 37).